A 497-amino-acid polypeptide reads, in one-letter code: B3 domain-containing protein REM1 (497 aa).

DNA-binding regions (TF-B3) lie at residues 7–92 (PSLF…SSES), 142–239 (FLRA…LCSH), and 278–379 (FLTQ…HSKI). Positions 87 to 135 (AVSSESDDDESDDTDDSESDDESNDTDDSESDDSEDNGEGDSSLVNKEA) are disordered. The segment covering 91-125 (ESDDDESDDTDDSESDDESNDTDDSESDDSEDNGE) has biased composition (acidic residues).

Specifically expressed in the reproductive meristem.

Its subcellular location is the nucleus. In terms of biological role, may play a role in flower development. The protein is B3 domain-containing protein REM1 (REM1) of Brassica oleracea var. botrytis (Cauliflower).